The primary structure comprises 3603 residues: Plipastatin synthase subunit D (3603 aa).

Residues I7 to A306 are condensation 1. A domain 1 (proline-activating) region spans residues I7–N1043. Residues T490–I889 form an adenylation 1 region. The 76-residue stretch at A966 to E1041 folds into the Carrier 1 domain. S1001 carries the O-(pantetheine 4'-phosphoryl)serine modification. Positions K1053–A1334 are condensation 2. The tract at residues K1053 to R2069 is domain 2 (glutamine-activating). The segment at T1521–V1924 is adenylation 2. The region spanning A1997 to T2072 is the Carrier 2 domain. An O-(pantetheine 4'-phosphoryl)serine modification is found at S2032. Positions K2084–E2374 are condensation 3. Residues K2084–I3596 are domain 3 (proline-activating). The adenylation 3 stretch occupies residues T2560 to V2956. The 75-residue stretch at P3034–D3108 folds into the Carrier 3 domain. S3069 carries the O-(pantetheine 4'-phosphoryl)serine modification. Residues V3116–I3596 are epimerization.

This sequence belongs to the ATP-dependent AMP-binding enzyme family. Pantetheine 4'-phosphate is required as a cofactor.

Its function is as follows. This protein is a multifunctional enzyme, able to activate and polymerize the amino acids Pro, Gln and Tyr as part of the biosynthesis of the lipopeptide antibiotic plipastatin. The Tyr residue is further epimerized to the D-isomer form. The activation sites for these amino acids consist of individual domains. This chain is Plipastatin synthase subunit D (ppsD), found in Bacillus subtilis (strain 168).